Consider the following 207-residue polypeptide: Non-structural protein 5 (207 aa).

One can recognise a DRBM domain in the interval 2 to 69 (DPVSVVHSFA…CVLISNDLKE (68 aa)).

This is Non-structural protein 5 (Segment-12) from Banna virus (BAV).